The primary structure comprises 289 residues: ATP phosphoribosyltransferase (289 aa).

The protein belongs to the ATP phosphoribosyltransferase family. Long subfamily. It depends on Mg(2+) as a cofactor.

The protein localises to the cytoplasm. The catalysed reaction is 1-(5-phospho-beta-D-ribosyl)-ATP + diphosphate = 5-phospho-alpha-D-ribose 1-diphosphate + ATP. It functions in the pathway amino-acid biosynthesis; L-histidine biosynthesis; L-histidine from 5-phospho-alpha-D-ribose 1-diphosphate: step 1/9. Feedback inhibited by histidine. Its function is as follows. Catalyzes the condensation of ATP and 5-phosphoribose 1-diphosphate to form N'-(5'-phosphoribosyl)-ATP (PR-ATP). Has a crucial role in the pathway because the rate of histidine biosynthesis seems to be controlled primarily by regulation of HisG enzymatic activity. This is ATP phosphoribosyltransferase from Methanosarcina barkeri (strain Fusaro / DSM 804).